The following is a 631-amino-acid chain: FAST kinase domain-containing protein 4 (631 aa).

A mitochondrion-targeting transit peptide spans 1–107 (MAAHLVKRCT…NQAAMVLIRL (107 aa)). At serine 553 the chain carries Phosphoserine. The 59-residue stretch at 561 to 619 (LAFLRWEFPNFNSRSKDLLGRFVLARRHIVAAGFLIVDVPFYEWLELKSEWQKGAYLKD) folds into the RAP domain.

Belongs to the FAST kinase family. As to expression, ubiquitously expressed. Expression detected in spleen, thymus, testis, ovary, colon, heart, smooth muscle, kidney, brain, lung, liver and white adipose tissue with highest expression in smooth muscle.

The protein resides in the mitochondrion matrix. Plays a role in processing of mitochondrial RNA precursors and in stabilization of a subset of mature mitochondrial RNA species, such as MT-CO1, MT-CO2, MT-CYB, MT-CO3, MT-ND3, MT-ND5 and MT-ATP8/6. May play a role in cell cycle progression. This is FAST kinase domain-containing protein 4 from Homo sapiens (Human).